The chain runs to 187 residues: UPF0398 protein SAB1311c (187 aa).

It belongs to the UPF0398 family.

The chain is UPF0398 protein SAB1311c from Staphylococcus aureus (strain bovine RF122 / ET3-1).